The following is a 151-amino-acid chain: MSTAARRRLMRDFKRMQTDPPAGVSASPIPDNVMTWNAVIIGPADTPFEDGTFRLVMQFEEQYPNKPPQVKFISQMFHPNVYANGELCLDILQNRWSPTYDVAAVLTSIQSLLNDPNTGSPANVEASNLYKDNRREYIKRVRETVERSWED.

In terms of domain architecture, UBC core spans 4 to 150 (AARRRLMRDF…VRETVERSWE (147 aa)). The active-site Glycyl thioester intermediate is C88.

Belongs to the ubiquitin-conjugating enzyme family.

It localises to the cytoplasm. The protein resides in the nucleus. The catalysed reaction is S-ubiquitinyl-[E1 ubiquitin-activating enzyme]-L-cysteine + [E2 ubiquitin-conjugating enzyme]-L-cysteine = [E1 ubiquitin-activating enzyme]-L-cysteine + S-ubiquitinyl-[E2 ubiquitin-conjugating enzyme]-L-cysteine.. It functions in the pathway protein modification; protein ubiquitination. Functionally, catalyzes the covalent attachment of ubiquitin to other proteins. Plays a role in transcription regulation by catalyzing the monoubiquitination of histone H2B to form H2BK123ub1. H2BK123ub1 gives a specific tag for epigenetic transcriptional activation and is also a prerequisite for H3K4me and H3K79me formation. Also involved in postreplication repair of UV-damaged DNA, in N-end rule-dependent protein degradation and in sporulation. This chain is Ubiquitin-conjugating enzyme E2 2 (UBC2), found in Trichoderma harzianum (Hypocrea lixii).